The chain runs to 115 residues: Anamorsin homolog 1 (115 aa).

The interval 30-115 is disordered; it reads VKEATKGEDC…KVKLNLTDDI (86 aa). Residues cysteine 39, cysteine 46, cysteine 49, and cysteine 51 each coordinate [2Fe-2S] cluster. Positions 39 to 51 are fe-S binding site A; sequence CTTRRRACKNCTC. Residues cysteine 77, cysteine 80, cysteine 88, and cysteine 91 each contribute to the [4Fe-4S] cluster site. 2 short sequence motifs (cx2C motif) span residues 77–80 and 88–91; these read CGNC and CATC. Residues 77–91 form a fe-S binding site B region; it reads CGNCAKGDAFRCATC.

Belongs to the anamorsin family. As to quaternary structure, monomer. The cofactor is [2Fe-2S] cluster. It depends on [4Fe-4S] cluster as a cofactor.

The protein resides in the cytoplasm. It is found in the mitochondrion intermembrane space. Its function is as follows. Component of the cytosolic iron-sulfur (Fe-S) protein assembly (CIA) machinery. Required for the maturation of extramitochondrial Fe-S proteins. Part of an electron transfer chain functioning in an early step of cytosolic Fe-S biogenesis, facilitating the de novo assembly of a [4Fe-4S] cluster on the cytosolic Fe-S scaffold complex. Electrons are transferred from NADPH via a FAD- and FMN-containing diflavin oxidoreductase. Together with the diflavin oxidoreductase, also required for the assembly of the diferric tyrosyl radical cofactor of ribonucleotide reductase (RNR), probably by providing electrons for reduction during radical cofactor maturation in the catalytic small subunit. The polypeptide is Anamorsin homolog 1 (Trypanosoma cruzi (strain CL Brener)).